Here is a 251-residue protein sequence, read N- to C-terminus: Malonyl-[acyl-carrier protein] O-methyltransferase (251 aa).

This sequence belongs to the methyltransferase superfamily.

The catalysed reaction is malonyl-[ACP] + S-adenosyl-L-methionine = malonyl-[ACP] methyl ester + S-adenosyl-L-homocysteine. It participates in cofactor biosynthesis; biotin biosynthesis. Converts the free carboxyl group of a malonyl-thioester to its methyl ester by transfer of a methyl group from S-adenosyl-L-methionine (SAM). It allows to synthesize pimeloyl-ACP via the fatty acid synthetic pathway. This is Malonyl-[acyl-carrier protein] O-methyltransferase from Erwinia billingiae (strain Eb661).